Consider the following 324-residue polypeptide: MMTYPVPQNPLLLRILRLMDAFSKSDDERDFYLDRVEGFILYIDLDKDQEDLNKIYQELEENAERYCLIPKLTFYEVKKIMETFINEKIYDIDTKEKFLEILQSKNAREQFLEFIYDHEAELEKWQQFYVERSRIRIIEWLRNNKFHFVFEEDLDFTKNVLEQLKIHLFDAKVGKEITQARQLLSNKAKIYYSNEALNPRPKRGRPPKQSAKVETETTISSDIYTKVPQAARRFLFLPEITSPSSITFSEKFDTEEEFLANLRGSTRVEDQLNLTNLSERFASLKELSAKLGYDSLSTGDFFGDDDEKVVTKTKGSKRGRKKSS.

Belongs to the UPF0158 family.

The sequence is that of UPF0158 protein CPn_0518/CP_0235/CPj0518/CpB0539 from Chlamydia pneumoniae (Chlamydophila pneumoniae).